Consider the following 245-residue polypeptide: tRNA1(Val) (adenine(37)-N6)-methyltransferase (245 aa).

It belongs to the methyltransferase superfamily. tRNA (adenine-N(6)-)-methyltransferase family.

It is found in the cytoplasm. It catalyses the reaction adenosine(37) in tRNA1(Val) + S-adenosyl-L-methionine = N(6)-methyladenosine(37) in tRNA1(Val) + S-adenosyl-L-homocysteine + H(+). Functionally, specifically methylates the adenine in position 37 of tRNA(1)(Val) (anticodon cmo5UAC). This chain is tRNA1(Val) (adenine(37)-N6)-methyltransferase, found in Citrobacter koseri (strain ATCC BAA-895 / CDC 4225-83 / SGSC4696).